A 209-amino-acid chain; its full sequence is Kynurenine formamidase (209 aa).

Residue Trp20 coordinates substrate. His50, His54, and Asp56 together coordinate Zn(2+). Catalysis depends on His60, which acts as the Proton donor/acceptor. 2 residues coordinate Zn(2+): His161 and Glu173.

This sequence belongs to the Cyclase 1 superfamily. KynB family. In terms of assembly, homodimer. Requires Zn(2+) as cofactor.

It carries out the reaction N-formyl-L-kynurenine + H2O = L-kynurenine + formate + H(+). It functions in the pathway amino-acid degradation; L-tryptophan degradation via kynurenine pathway; L-kynurenine from L-tryptophan: step 2/2. In terms of biological role, catalyzes the hydrolysis of N-formyl-L-kynurenine to L-kynurenine, the second step in the kynurenine pathway of tryptophan degradation. This is Kynurenine formamidase from Bacillus cytotoxicus (strain DSM 22905 / CIP 110041 / 391-98 / NVH 391-98).